The primary structure comprises 389 residues: Na(+)/H(+) antiporter NhaA 1 (389 aa).

The next 11 membrane-spanning stretches (helical) occupy residues 12–32 (VLNEAFGGVLLIVCTLLALLV), 62–82 (FLLWINDGLISIFFFAIGLEL), 97–117 (IVLPFMAALGGILIPAMLFAL), 128–148 (GWAIPTATDTAFALAILMMCG), 157–177 (IFLLSLAIFDDVGAILIIAIF), 184–204 (IVAFVVAGLAILAMLILNLLG), 220–240 (ISVLKSGVHATLAGIVTAFFI), 260–280 (FWIAFIILPLFAFANAGVNLS), 282–302 (IDIGAIFSGVSIGIFLGLFVG), 331–351 (LYGVCILTGIGFTMSLFIDGL), and 365–385 (LAILIASFCSGIWGFIYLKFF).

The protein belongs to the NhaA Na(+)/H(+) (TC 2.A.33) antiporter family.

Its subcellular location is the cell inner membrane. The catalysed reaction is Na(+)(in) + 2 H(+)(out) = Na(+)(out) + 2 H(+)(in). Na(+)/H(+) antiporter that extrudes sodium in exchange for external protons. The sequence is that of Na(+)/H(+) antiporter NhaA 1 from Campylobacter jejuni (strain RM1221).